A 62-amino-acid chain; its full sequence is Guanine nucleotide-binding protein subunit gamma (62 aa).

The residue at position 59 (C59) is a Cysteine methyl ester. The S-geranylgeranyl cysteine moiety is linked to residue C59. Residues 60 to 62 (SVL) constitute a propeptide, removed in mature form.

Belongs to the G protein gamma family. In terms of assembly, g proteins are composed of 3 units, alpha, beta and gamma. Interacts with gpb-1 and gpb-2.

The protein resides in the cell membrane. Functionally, guanine nucleotide-binding proteins (G proteins) are involved as a modulator or transducer in various transmembrane signaling systems. The beta and gamma chains are required for the GTPase activity, for replacement of GDP by GTP, and for G protein-effector interaction. This is Guanine nucleotide-binding protein subunit gamma (gpc-1) from Caenorhabditis briggsae.